We begin with the raw amino-acid sequence, 195 residues long: Thioredoxin reductase-like selenoprotein T (195 aa).

Residues 1-19 (MRLLLLLLVAASAVVRSEA) form the signal peptide. The cysteinyl-selenocysteine (Cys-Sec) cross-link spans 46–49 (CVSU). Position 49 (selenocysteine 49) is a non-standard amino acid, selenocysteine. Residues 85–103 (IASFLSVFKLVLIGLIIVG) traverse the membrane as a helical segment.

This sequence belongs to the SelWTH family. Selenoprotein T subfamily. May contain a selenide-sulfide bond between Cys-46 and Sec-49. This bond is speculated to serve as redox-active pair. As to expression, ubiquitous. Highly expressed in the endocrine pancreas. Expressed at low levels in the adult brain.

The protein resides in the endoplasmic reticulum membrane. It catalyses the reaction [thioredoxin]-dithiol + NADP(+) = [thioredoxin]-disulfide + NADPH + H(+). Its function is as follows. Selenoprotein with thioredoxin reductase-like oxidoreductase activity. Protects dopaminergic neurons against oxidative stress and cell death. Involved in ADCYAP1/PACAP-induced calcium mobilization and neuroendocrine secretion. Plays a role in fibroblast anchorage and redox regulation. In gastric smooth muscle, modulates the contraction processes through the regulation of calcium release and MYLK activation. In pancreatic islets, involved in the control of glucose homeostasis, contributes to prolonged ADCYAP1/PACAP-induced insulin secretion. This is Thioredoxin reductase-like selenoprotein T from Mus musculus (Mouse).